The primary structure comprises 1144 residues: ATP-dependent helicase/deoxyribonuclease subunit B (1144 aa).

The 276-residue stretch at 1–276 (MAIRYVFGRA…IDLDRNERPV (276 aa)) folds into the UvrD-like helicase ATP-binding domain. 8–15 (GRAGRGKS) serves as a coordination point for ATP. Positions 274–584 (RPVLPKVQEI…LVGSIERSKS (311 aa)) constitute a UvrD-like helicase C-terminal domain. 4 residues coordinate [4Fe-4S] cluster: Cys784, Cys1102, Cys1105, and Cys1111.

It belongs to the helicase family. AddB/RexB type 1 subfamily. In terms of assembly, heterodimer of AddA and AddB. It depends on Mg(2+) as a cofactor. Requires [4Fe-4S] cluster as cofactor.

The heterodimer acts as both an ATP-dependent DNA helicase and an ATP-dependent, dual-direction single-stranded exonuclease. Recognizes the chi site generating a DNA molecule suitable for the initiation of homologous recombination. The AddB subunit has 5' -&gt; 3' nuclease activity but not helicase activity. The sequence is that of ATP-dependent helicase/deoxyribonuclease subunit B from Alkaliphilus oremlandii (strain OhILAs) (Clostridium oremlandii (strain OhILAs)).